The following is a 927-amino-acid chain: Non-lysosomal glucosylceramidase (927 aa).

The disordered stretch occupies residues 32 to 62; it reads EETGGTKDVQVTDCKSPEDSRPPKETDCCNP. Basic and acidic residues predominate over residues 46–58; it reads KSPEDSRPPKETD.

The protein belongs to the non-lysosomal glucosylceramidase family. As to expression, widely expressed. Mainly expressed in brain, heart, skeletal muscle, kidney and placenta and expressed at lower levels in liver, spleen, small intestine and lung. Detectable in colon, thymus and peripheral blood leukocytes.

It localises to the endoplasmic reticulum membrane. The protein resides in the golgi apparatus membrane. It carries out the reaction a beta-D-glucosyl-(1&lt;-&gt;1')-N-acylsphing-4-enine + H2O = an N-acylsphing-4-enine + D-glucose. It catalyses the reaction a beta-D-galactosyl-(1&lt;-&gt;1')-N-acylsphing-4-enine + H2O = an N-acylsphing-4-enine + D-galactose. The catalysed reaction is beta-D-glucosyl-(1-&gt;3)-O-lithocholate + H2O = lithocholate + D-glucose. The enzyme catalyses beta-D-glucosyl-(1-&gt;3)-O-chenodeoxycholate + H2O = chenodeoxycholate + D-glucose. It carries out the reaction a di-trans,poly-cis-dolichyl beta-D-glucosyl phosphate + chenodeoxycholate = beta-D-glucosyl-(1-&gt;3)-O-chenodeoxycholate + a di-trans,poly-cis-dolichyl phosphate + H(+). It catalyses the reaction octyl beta-D-glucose + chenodeoxycholate = beta-D-glucosyl-(1-&gt;3)-O-chenodeoxycholate + octan-1-ol. The catalysed reaction is cholesteryl 3-beta-D-glucoside + H2O = cholesterol + D-glucose. The enzyme catalyses a beta-D-glucosyl-(1&lt;-&gt;1')-N-acylsphing-4-enine + cholesterol = cholesteryl 3-beta-D-glucoside + an N-acylsphing-4-enine. It carries out the reaction beta-D-glucosyl-N-(9Z-octadecenoyl)-sphing-4E-enine + cholesterol = N-(9Z-octadecenoyl)-sphing-4-enine + cholesteryl 3-beta-D-glucoside. It catalyses the reaction a beta-D-galactosyl-(1&lt;-&gt;1')-N-acylsphing-4-enine + cholesterol = cholesteryl 3-beta-D-galactoside + an N-acylsphing-4-enine. The catalysed reaction is 1-(beta-D-galactosyl)-N-dodecanoylsphing-4-enine + cholesterol = cholesteryl 3-beta-D-galactoside + N-dodecanoylsphing-4-enine. The protein operates within lipid metabolism; sphingolipid metabolism. It functions in the pathway steroid metabolism; cholesterol metabolism. With respect to regulation, inhibited by AMP-DMN/N -((5-adamantane-1-yl-methoxy)pentyl)-deoxynojirimycin. Activated by Mn(2+), Co(2+) and Mg(2+) and inhibited by Zn(2+). Enzymatic activity is dependent on membrane association and requires the presence of lipids. The membrane-associated enzyme is not inhibited by condutiriol B epoxide and bromocondutiriol B epoxide. Non-lysosomal glucosylceramidase that catalyzes the hydrolysis of glucosylceramides/GlcCers (such as beta-D-glucosyl-(1&lt;-&gt;1')-N-acylsphing-4-enine) to free glucose and ceramides (such as N-acylsphing-4-enine). GlcCers are membrane glycosphingolipids that have a wide intracellular distribution. They are the main precursors of more complex glycosphingolipids that play a role in cellular growth, differentiation, adhesion, signaling, cytoskeletal dynamics and membrane properties. Involved in the transglucosylation of cholesterol, transfers glucose from GlcCer to cholesterol, thereby modifying its water solubility and biological properties. Under specific conditions, may catalyze the reverse reaction, transferring glucose from cholesteryl-3-beta-D-glucoside to ceramide (such as N-acylsphing-4-enine). May play a role in the metabolism of bile acids. Able to hydrolyze bile acid 3-O-glucosides as well as to produce bile acid-glucose conjugates thanks to a bile acid glucosyl transferase activity. Catalyzes the hydrolysis of galactosylceramides/GalCers (such as beta-D-galactosyl-(1&lt;-&gt;1')-N-acylsphing-4-enine), as well as the galactosyl transfer between GalCers and cholesterol in vitro with lower activity compared with their activity against GlcCers. This Homo sapiens (Human) protein is Non-lysosomal glucosylceramidase.